Consider the following 466-residue polypeptide: Soluble pyridine nucleotide transhydrogenase (466 aa).

Glu36–Cys45 is a binding site for FAD.

This sequence belongs to the class-I pyridine nucleotide-disulfide oxidoreductase family. It depends on FAD as a cofactor.

It is found in the cytoplasm. It carries out the reaction NAD(+) + NADPH = NADH + NADP(+). Functionally, conversion of NADPH, generated by peripheral catabolic pathways, to NADH, which can enter the respiratory chain for energy generation. In Salmonella paratyphi C (strain RKS4594), this protein is Soluble pyridine nucleotide transhydrogenase.